The chain runs to 210 residues: Probable glutathione S-transferase gst-36 (210 aa).

Residues 2–79 form the GST N-terminal domain; the sequence is PHFKFYYFDV…YLGHQFHRAG (78 aa). Glutathione contacts are provided by residues Y8, W39, K43, 49–51, and 63–64; these read GQV and QT. The region spanning 81–210 is the GST C-terminal domain; it reads NAVDCARLDM…YVSQRKATPA (130 aa).

The protein belongs to the GST superfamily. Sigma family.

The enzyme catalyses RX + glutathione = an S-substituted glutathione + a halide anion + H(+). In terms of biological role, conjugation of reduced glutathione to a wide number of exogenous and endogenous hydrophobic electrophiles. The sequence is that of Probable glutathione S-transferase gst-36 (gst-36) from Caenorhabditis elegans.